The primary structure comprises 300 residues: Coatomer subunit epsilon (300 aa).

This sequence belongs to the COPE family. As to quaternary structure, oligomeric complex that consists of at least the alpha, beta, beta', gamma, delta, epsilon and zeta subunits.

Its subcellular location is the cytoplasm. The protein localises to the golgi apparatus membrane. It localises to the cytoplasmic vesicle. The protein resides in the COPI-coated vesicle membrane. Its function is as follows. The coatomer is a cytosolic protein complex that binds to dilysine motifs and reversibly associates with Golgi non-clathrin-coated vesicles, which further mediate biosynthetic protein transport from the ER, via the Golgi up to the trans Golgi network. The coatomer complex is required for budding from Golgi membranes, and is essential for the retrograde Golgi-to-ER transport of dilysine-tagged proteins. The protein is Coatomer subunit epsilon (cope) of Dictyostelium discoideum (Social amoeba).